The sequence spans 373 residues: MKLKSGSMVKIRNKINDIEPYVPGRSIKEIADAYGLKEDEIIKLGSNENPLGPSPAAVEAMERELESVHRYPESALTDLREAIADYAGVGMDQVIVGGDGADEIIDVLGRTFLEPGESFVVPMPSYMYYEYTLQAHDARAVHARWDVNENRLDLESVLDAVDESTRLVFLCTPNNPTGGLIDKKDIRAVLESTDTLVVVDEAYTEFAGVDNTDLLPDHENLFILRTFSKVMGLAGMRIGYGLGDPQIIEYMHRVKPVFSLTRLSHAAALATIRDRDYIKKSTEYSIKSREYLYSGLKKFPELRVFRSYANYILIDVRGTGRTAAELSEELLRKGIIVRDCTSFTGLDEYWIRVSVGTLEEDRRFLEVLGELVQ.

An N6-(pyridoxal phosphate)lysine modification is found at Lys229.

The protein belongs to the class-II pyridoxal-phosphate-dependent aminotransferase family. Histidinol-phosphate aminotransferase subfamily. Pyridoxal 5'-phosphate serves as cofactor.

It carries out the reaction L-histidinol phosphate + 2-oxoglutarate = 3-(imidazol-4-yl)-2-oxopropyl phosphate + L-glutamate. Its pathway is amino-acid biosynthesis; L-histidine biosynthesis; L-histidine from 5-phospho-alpha-D-ribose 1-diphosphate: step 7/9. The sequence is that of Histidinol-phosphate aminotransferase (hisC) from Methanothermobacter thermautotrophicus (strain ATCC 29096 / DSM 1053 / JCM 10044 / NBRC 100330 / Delta H) (Methanobacterium thermoautotrophicum).